The chain runs to 78 residues: Large ribosomal subunit protein bL28 (78 aa).

Positions 1–20 (MSRVCQVTSKRPAVGNNRSH) are disordered.

The protein belongs to the bacterial ribosomal protein bL28 family.

In Haemophilus ducreyi (strain 35000HP / ATCC 700724), this protein is Large ribosomal subunit protein bL28.